The following is a 119-amino-acid chain: Large ribosomal subunit protein bL20 (119 aa).

Belongs to the bacterial ribosomal protein bL20 family.

In terms of biological role, binds directly to 23S ribosomal RNA and is necessary for the in vitro assembly process of the 50S ribosomal subunit. It is not involved in the protein synthesizing functions of that subunit. The sequence is that of Large ribosomal subunit protein bL20 from Streptococcus mutans serotype c (strain ATCC 700610 / UA159).